Here is a 692-residue protein sequence, read N- to C-terminus: A-kinase anchor protein 8 (692 aa).

Residues 1-195 (MDQGYGGYGA…FMRGRGQGRF (195 aa)) are interaction with MCM2. Positions 1-210 (MDQGYGGYGA…PGTFMRSDPF (210 aa)) are interaction with DPY30. At arginine 109 the chain carries Asymmetric dimethylarginine; alternate. At arginine 109 the chain carries Omega-N-methylarginine; alternate. The tract at residues 109 to 201 (RGGSGGGGEG…QGRFQDRSNP (93 aa)) is interaction with DDX5. Serine 112 is subject to Phosphoserine. Disordered stretches follow at residues 168–203 (GQYS…NPGT), 231–254 (GGRG…SMAP), and 269–382 (STMP…RTRD). Residues 172-182 (ECRDPARERGS) are compositionally biased toward basic and acidic residues. Serine 199 is modified (phosphoserine). Omega-N-methylarginine is present on residues arginine 233 and arginine 277. Basic and acidic residues-rich tracts occupy residues 281–297 (RMRD…DRFG) and 314–323 (PDTKLARVDS). A Bipartite nuclear localization signal motif is present at residues 289–306 (KRRGFDRFGPDGTGRKRK). Residue lysine 317 forms a Glycyl lysine isopeptide (Lys-Gly) (interchain with G-Cter in SUMO2) linkage. 3 positions are modified to phosphoserine: serine 323, serine 328, and serine 339. Acidic residues predominate over residues 324 to 334 (EGDFSENDDAA). The tract at residues 387–450 (RIQFACSVCK…NKKIEKRRQE (64 aa)) is involved in chromatin-binding. C2H2 AKAP95-type zinc fingers lie at residues 392–414 (CSVC…SKFH) and 481–504 (CLAC…SVDH). Positions 525–569 (SVLNNRHIVKMLEKYLKGEDPFTSETVDPEMEGDDNLGGEDKKET) are involved in condensin complex recruitment. Residues 545–571 (PFTSETVDPEMEGDDNLGGEDKKETPE) form a disordered region. Residues 551–562 (VDPEMEGDDNLG) are compositionally biased toward acidic residues. Lysine 567 is covalently cross-linked (Glycyl lysine isopeptide (Lys-Gly) (interchain with G-Cter in SUMO2)). The interval 572–589 (EVAADVLAEVITAAVRAV) is RII-binding. A required for interaction with MYCBP region spans residues 576–593 (DVLAEVITAAVRAVDGEG). Residues 592–692 (EGAPAPESSG…AESKDAVPTE (101 aa)) form a disordered region. Basic and acidic residues predominate over residues 634–646 (AHEKGVPKARSEA). Position 662 is a phosphoserine (serine 662). Residues 663–675 (AQTRVAPAPAAAD) are compositionally biased toward low complexity. The span at 683–692 (AESKDAVPTE) shows a compositional bias: basic and acidic residues. Position 685 is a phosphoserine (serine 685).

The protein belongs to the AKAP95 family. As to quaternary structure, binds to the PKA RII-alpha regulatory subunit PRKAR2A (phosphorylated at 'Thr-54') during mitosis. Interacts (via C-terminus) with FIGN. Interacts with NCAPD2, CCND1, MCM2, RPS6KA1, PDE4A. Interacts with CCND3, CCNE1, DDX5, CASP3. Interacts with NFKB1; detetcted in the cytoplasm. Interacts with MYCBP; MYCBP is translocated to the nucleus and the interaction prevents the association of the PKA catalytic subunit leading to suppression of PKA activity. Interacts with DPY30; mediating AKAP8 association with at least the MLL4/WBP7 HMT complex. Interacts with HDAC3; increased during mitosis. Interacts with GJA1; in the nucleus and in the nuclear membrane; the nuclear association increases with progress of cell cycle G1, S and G2 phase and decreases in M phase. Phosphorylated on tyrosine residues probably by SRC subfamily protein kinases; multiple phosphorylation is leading to dissociation from nuclear structures implicated in chromatin structural changes. As to expression, highly expressed in heart, liver, skeletal muscle, kidney and pancreas. Expressed in mature dendritic cells.

It is found in the nucleus. It localises to the nucleus matrix. Its subcellular location is the nucleolus. The protein localises to the cytoplasm. Functionally, anchoring protein that mediates the subcellular compartmentation of cAMP-dependent protein kinase (PKA type II). Acts as an anchor for a PKA-signaling complex onto mitotic chromosomes, which is required for maintenance of chromosomes in a condensed form throughout mitosis. Recruits condensin complex subunit NCAPD2 to chromosomes required for chromatin condensation; the function appears to be independent from PKA-anchoring. May help to deliver cyclin D/E to CDK4 to facilitate cell cycle progression. Required for cell cycle G2/M transition and histone deacetylation during mitosis. In mitotic cells recruits HDAC3 to the vicinity of chromatin leading to deacetylation and subsequent phosphorylation at 'Ser-10' of histone H3; in this function may act redundantly with AKAP8L. Involved in nuclear retention of RPS6KA1 upon ERK activation thus inducing cell proliferation. May be involved in regulation of DNA replication by acting as scaffold for MCM2. Enhances HMT activity of the KMT2 family MLL4/WBP7 complex and is involved in transcriptional regulation. In a teratocarcinoma cell line is involved in retinoic acid-mediated induction of developmental genes implicating H3 'Lys-4' methylation. May be involved in recruitment of active CASP3 to the nucleus in apoptotic cells. May act as a carrier protein of GJA1 for its transport to the nucleus. May play a repressive role in the regulation of rDNA transcription. Preferentially binds GC-rich DNA in vitro. In cells, associates with ribosomal RNA (rRNA) chromatin, preferentially with rRNA promoter and transcribed regions. Involved in modulation of Toll-like receptor signaling. Required for the cAMP-dependent suppression of TNF-alpha in early stages of LPS-induced macrophage activation; the function probably implicates targeting of PKA to NFKB1. This is A-kinase anchor protein 8 (AKAP8) from Homo sapiens (Human).